Consider the following 251-residue polypeptide: Triosephosphate isomerase (251 aa).

10–12 (NWK) contacts substrate. The active-site Electrophile is histidine 99. The active-site Proton acceptor is glutamate 167. Residues glycine 173, serine 211, and 232 to 233 (GG) contribute to the substrate site.

Belongs to the triosephosphate isomerase family. In terms of assembly, homodimer.

The protein localises to the cytoplasm. It carries out the reaction D-glyceraldehyde 3-phosphate = dihydroxyacetone phosphate. It functions in the pathway carbohydrate biosynthesis; gluconeogenesis. It participates in carbohydrate degradation; glycolysis; D-glyceraldehyde 3-phosphate from glycerone phosphate: step 1/1. Its function is as follows. Involved in the gluconeogenesis. Catalyzes stereospecifically the conversion of dihydroxyacetone phosphate (DHAP) to D-glyceraldehyde-3-phosphate (G3P). This Neisseria meningitidis serogroup A / serotype 4A (strain DSM 15465 / Z2491) protein is Triosephosphate isomerase.